The sequence spans 595 residues: Aspartate--tRNA ligase (595 aa).

E171 contacts L-aspartate. The tract at residues Q195–K198 is aspartate. R217 lines the L-aspartate pocket. Residues R217–E219 and Q226 contribute to the ATP site. Residue H448 coordinates L-aspartate. Position 482 (E482) interacts with ATP. Position 489 (R489) interacts with L-aspartate. G534–R537 provides a ligand contact to ATP.

The protein belongs to the class-II aminoacyl-tRNA synthetase family. Type 1 subfamily. In terms of assembly, homodimer.

The protein localises to the cytoplasm. It carries out the reaction tRNA(Asp) + L-aspartate + ATP = L-aspartyl-tRNA(Asp) + AMP + diphosphate. Its function is as follows. Catalyzes the attachment of L-aspartate to tRNA(Asp) in a two-step reaction: L-aspartate is first activated by ATP to form Asp-AMP and then transferred to the acceptor end of tRNA(Asp). In Erwinia tasmaniensis (strain DSM 17950 / CFBP 7177 / CIP 109463 / NCPPB 4357 / Et1/99), this protein is Aspartate--tRNA ligase.